We begin with the raw amino-acid sequence, 138 residues long: Large ribosomal subunit protein bL17 (138 aa).

It belongs to the bacterial ribosomal protein bL17 family. Part of the 50S ribosomal subunit. Contacts protein L32.

The chain is Large ribosomal subunit protein bL17 from Methylorubrum populi (strain ATCC BAA-705 / NCIMB 13946 / BJ001) (Methylobacterium populi).